A 536-amino-acid chain; its full sequence is Maintenance of mitochondrial morphology protein 1 (536 aa).

Residues methionine 1 to glycine 25 lie on the Lumenal side of the membrane. Residues leucine 26–phenylalanine 46 form a helical membrane-spanning segment. Residues glycine 47–threonine 536 lie on the Cytoplasmic side of the membrane. Disordered stretches follow at residues histidine 52–proline 135, glycine 275–alanine 331, glycine 416–methionine 467, and tyrosine 505–threonine 536. Polar residues-rich tracts occupy residues tyrosine 69–arginine 81, serine 88–serine 105, and tyrosine 112–serine 121. Over residues lysine 122–serine 132 the composition is skewed to basic residues. The SMP-LTD domain occupies glutamine 134–proline 409. A compositionally biased stretch (low complexity) spans threonine 321–alanine 331. Composition is skewed to gly residues over residues threonine 442 to methionine 467 and glycine 507 to arginine 517.

The protein belongs to the MMM1 family. As to quaternary structure, homodimer. Component of the ER-mitochondria encounter structure (ERMES) or MDM complex, composed of MMM1, MDM10, MDM12 and MDM34. An MMM1 homodimer associates with one molecule of MDM12 on each side in a pairwise head-to-tail manner, and the SMP-LTD domains of MMM1 and MDM12 generate a continuous hydrophobic tunnel for phospholipid trafficking.

The protein localises to the endoplasmic reticulum membrane. Its function is as follows. Component of the ERMES/MDM complex, which serves as a molecular tether to connect the endoplasmic reticulum (ER) and mitochondria. Components of this complex are involved in the control of mitochondrial shape and protein biogenesis, and function in nonvesicular lipid trafficking between the ER and mitochondria. The MDM12-MMM1 subcomplex functions in the major beta-barrel assembly pathway that is responsible for biogenesis of all outer membrane beta-barrel proteins, and acts in a late step after the SAM complex. The MDM10-MDM12-MMM1 subcomplex further acts in the TOM40-specific pathway after the action of the MDM12-MMM1 complex. Essential for establishing and maintaining the structure of mitochondria and maintenance of mtDNA nucleoids. In Ajellomyces dermatitidis (strain ER-3 / ATCC MYA-2586) (Blastomyces dermatitidis), this protein is Maintenance of mitochondrial morphology protein 1.